Consider the following 276-residue polypeptide: NAD kinase (276 aa).

Asp-61 (proton acceptor) is an active-site residue. NAD(+) contacts are provided by residues 61 to 62 (DG), 134 to 135 (ND), Arg-145, Lys-162, Asp-164, Val-172, 175 to 180 (TAYSFS), and Gln-234.

This sequence belongs to the NAD kinase family. It depends on a divalent metal cation as a cofactor.

The protein localises to the cytoplasm. The enzyme catalyses NAD(+) + ATP = ADP + NADP(+) + H(+). Involved in the regulation of the intracellular balance of NAD and NADP, and is a key enzyme in the biosynthesis of NADP. Catalyzes specifically the phosphorylation on 2'-hydroxyl of the adenosine moiety of NAD to yield NADP. This Clostridium perfringens (strain 13 / Type A) protein is NAD kinase.